A 170-amino-acid polypeptide reads, in one-letter code: Ecotin (170 aa).

Positions 1 to 21 (MNKASVVFSGLLMAVSASAIA) are cleaved as a signal peptide. The cysteines at positions 78 and 115 are disulfide-linked.

This sequence belongs to the protease inhibitor I11 (ecotin) family. In terms of assembly, homodimer.

Its subcellular location is the periplasm. In terms of biological role, general inhibitor of pancreatic serine proteases: inhibits chymotrypsin, trypsin, elastases, factor X, kallikrein as well as a variety of other proteases. The protein is Ecotin of Serratia proteamaculans (strain 568).